A 232-amino-acid polypeptide reads, in one-letter code: Heptaprenylglyceryl phosphate synthase (232 aa).

Lysine 12 serves as a coordination point for sn-glycerol 1-phosphate. 2 residues coordinate Mg(2+): aspartate 14 and threonine 40. Residues 159-164, glycine 189, and 209-210 contribute to the sn-glycerol 1-phosphate site; these read YLEYSG and GN.

The protein belongs to the GGGP/HepGP synthase family. Group I subfamily. As to quaternary structure, homodimer. Requires Mg(2+) as cofactor.

The enzyme catalyses sn-glycerol 1-phosphate + all-trans-heptaprenyl diphosphate = 3-heptaprenyl-sn-glycero-1-phosphate + diphosphate. Its pathway is membrane lipid metabolism; glycerophospholipid metabolism. Its function is as follows. Prenyltransferase that catalyzes in vivo the transfer of the heptaprenyl moiety of heptaprenyl pyrophosphate (HepPP; 35 carbon atoms) to the C3 hydroxyl of sn-glycerol-1-phosphate (G1P), producing heptaprenylglyceryl phosphate (HepGP). This reaction is an ether-bond-formation step in the biosynthesis of archaea-type G1P-based membrane lipids found in Bacillales. This Shouchella clausii (strain KSM-K16) (Alkalihalobacillus clausii) protein is Heptaprenylglyceryl phosphate synthase.